The sequence spans 148 residues: Phosphopantetheine adenylyltransferase (148 aa).

The protein belongs to the eukaryotic CoaD family.

Its subcellular location is the cytoplasm. The catalysed reaction is (R)-4'-phosphopantetheine + ATP + H(+) = 3'-dephospho-CoA + diphosphate. It functions in the pathway cofactor biosynthesis; coenzyme A biosynthesis. Reversibly transfers an adenylyl group from ATP to 4'-phosphopantetheine, yielding dephospho-CoA (dPCoA) and pyrophosphate. The polypeptide is Phosphopantetheine adenylyltransferase (Archaeoglobus fulgidus (strain ATCC 49558 / DSM 4304 / JCM 9628 / NBRC 100126 / VC-16)).